The sequence spans 604 residues: UvrABC system protein C (604 aa).

Residues 12–90 (TAPGVYLMRD…IKQHQPRYNL (79 aa)) enclose the GIY-YIG domain. Residues 200-235 (KDLVSGFRQRMKEAAEGLHYEEAARWRDLLKAIDTT) form the UVR domain.

This sequence belongs to the UvrC family. In terms of assembly, interacts with UvrB in an incision complex.

It localises to the cytoplasm. In terms of biological role, the UvrABC repair system catalyzes the recognition and processing of DNA lesions. UvrC both incises the 5' and 3' sides of the lesion. The N-terminal half is responsible for the 3' incision and the C-terminal half is responsible for the 5' incision. This is UvrABC system protein C from Trichlorobacter lovleyi (strain ATCC BAA-1151 / DSM 17278 / SZ) (Geobacter lovleyi).